The primary structure comprises 512 residues: ETS translocation variant 3 (512 aa).

Positions 35-116 (IQLWHFILEL…KGKRFTYKFN (82 aa)) form a DNA-binding region, ETS. The interval 136-222 (VPQSAPPVPT…NAIGGGGIGH (87 aa)) is disordered. 3 positions are modified to phosphoserine: Ser139, Ser159, and Ser315. Polar residues predominate over residues 158-184 (HSPTNDVQPGRFSASSLTASGQESSNG). A disordered region spans residues 336-512 (PEESTQFSIK…QGLATAAADA (177 aa)). Over residues 380 to 406 (IKVEPASEKDPESLRQSAREKEEHTQE) the composition is skewed to basic and acidic residues. A Glycyl lysine isopeptide (Lys-Gly) (interchain with G-Cter in SUMO2) cross-link involves residue Lys381. An N6-acetyllysine; alternate modification is found at Lys388. A Glycyl lysine isopeptide (Lys-Gly) (interchain with G-Cter in SUMO2); alternate cross-link involves residue Lys388. Residues 443 to 452 (EPLEVTEDIE) show a composition bias toward acidic residues. Basic and acidic residues-rich tracts occupy residues 453-468 (DRPG…KEDA) and 479-491 (RWND…ELSK).

This sequence belongs to the ETS family.

The protein localises to the nucleus. In terms of biological role, transcriptional repressor that contribute to growth arrest during terminal macrophage differentiation by repressing target genes involved in Ras-dependent proliferation. Represses MMP1 promoter activity. This chain is ETS translocation variant 3 (ETV3), found in Pan troglodytes (Chimpanzee).